The following is a 229-amino-acid chain: MDVRCLISPNLLNSKIKVSGNTHHLPFSSLSKKHQASSPIQAAINGGGSSKTVKRLITLSPSEGKWNGNWKTQYDVSLRDLQLQDLVEDGPPNSRVSVDLSVQRHASMGLSVDGRIMTSIARKCSICSSLYPRLIDTSFTVWILPSSRENRASTLPEIGGDDPSVIYVRPGYEANLDSLVQDTIRLTTYAKDICSDSCEKSEPTLHYVGQTNTASVDKRWSRLLELKKK.

The N-terminal 42 residues, methionine 1–alanine 42, are a transit peptide targeting the chloroplast.

Belongs to the DUF177 domain family.

It localises to the plastid. The protein localises to the chloroplast. Functionally, may play a role in synthesis, processing and/or stability of 23S rRNA. In Arabidopsis thaliana (Mouse-ear cress), this protein is Large ribosomal RNA subunit accumulation protein YCED homolog 2, chloroplastic.